The sequence spans 216 residues: Uracil phosphoribosyltransferase (216 aa).

Residues arginine 81, arginine 106, and 135–143 (DPMLATGSS) each bind 5-phospho-alpha-D-ribose 1-diphosphate. Residues isoleucine 200 and 205–207 (GDA) each bind uracil. Aspartate 206 is a 5-phospho-alpha-D-ribose 1-diphosphate binding site.

Belongs to the UPRTase family. The cofactor is Mg(2+).

The enzyme catalyses UMP + diphosphate = 5-phospho-alpha-D-ribose 1-diphosphate + uracil. Its pathway is pyrimidine metabolism; UMP biosynthesis via salvage pathway; UMP from uracil: step 1/1. Its activity is regulated as follows. Allosterically activated by GTP. In terms of biological role, catalyzes the conversion of uracil and 5-phospho-alpha-D-ribose 1-diphosphate (PRPP) to UMP and diphosphate. The polypeptide is Uracil phosphoribosyltransferase (upp) (Porphyromonas gingivalis (strain ATCC 33277 / DSM 20709 / CIP 103683 / JCM 12257 / NCTC 11834 / 2561)).